The following is a 296-amino-acid chain: Release factor glutamine methyltransferase (296 aa).

Residues glycine 133–glycine 137, aspartate 156, and asparagine 201 each bind S-adenosyl-L-methionine. Asparagine 201–tyrosine 204 serves as a coordination point for substrate.

This sequence belongs to the protein N5-glutamine methyltransferase family. PrmC subfamily.

It carries out the reaction L-glutaminyl-[peptide chain release factor] + S-adenosyl-L-methionine = N(5)-methyl-L-glutaminyl-[peptide chain release factor] + S-adenosyl-L-homocysteine + H(+). Its function is as follows. Methylates the class 1 translation termination release factors RF1/PrfA and RF2/PrfB on the glutamine residue of the universally conserved GGQ motif. This chain is Release factor glutamine methyltransferase, found in Rhodopirellula baltica (strain DSM 10527 / NCIMB 13988 / SH1).